We begin with the raw amino-acid sequence, 1247 residues long: Lon protease homolog 2, peroxisomal (1247 aa).

The Lon N-terminal domain occupies Leu22–Ile402. Disordered regions lie at residues Ser76–His103, Thr447–Asp503, and Asp626–Ser655. Positions Pro459–Gly477 are enriched in low complexity. Positions Asp626–Lys639 are enriched in basic and acidic residues. Gly721–Thr728 provides a ligand contact to ATP. A Lon proteolytic domain is found at Thr989–Glu1230. Residues Ser1099 and Lys1142 contribute to the active site.

This sequence belongs to the peptidase S16 family.

It is found in the peroxisome matrix. It carries out the reaction Hydrolysis of proteins in presence of ATP.. In terms of biological role, ATP-dependent serine protease that mediates the selective degradation of misfolded and unassembled polypeptides in the peroxisomal matrix. Necessary for type 2 peroxisome targeting signal (PTS2)-containing protein processing and facilitates peroxisome matrix protein import. This Candida dubliniensis (strain CD36 / ATCC MYA-646 / CBS 7987 / NCPF 3949 / NRRL Y-17841) (Yeast) protein is Lon protease homolog 2, peroxisomal.